The sequence spans 120 residues: Flagellar protein FliT (120 aa).

Residues 1–50 (MENLSPLLIEYQGLLKLIRNIKAMALNGLWDDVVEQEIVYIQSIERISQI) are required for homodimerization. The interval 60 to 98 (VQLQFRQLLQDILDTESQVKELLQNRMQELAVLIQQSQN) is fliD binding.

It belongs to the FliT family. In terms of assembly, homodimer. Interacts with FliD and FlhC.

The protein resides in the cytoplasm. The protein localises to the cytosol. Functionally, dual-function protein that regulates the transcription of class 2 flagellar operons and that also acts as an export chaperone for the filament-capping protein FliD. As a transcriptional regulator, acts as an anti-FlhDC factor; it directly binds FlhC, thus inhibiting the binding of the FlhC/FlhD complex to class 2 promoters, resulting in decreased expression of class 2 flagellar operons. As a chaperone, effects FliD transition to the membrane by preventing its premature polymerization, and by directing it to the export apparatus. This chain is Flagellar protein FliT, found in Dickeya chrysanthemi (Pectobacterium chrysanthemi).